A 322-amino-acid chain; its full sequence is Aspartate--ammonia ligase (322 aa).

It belongs to the class-II aminoacyl-tRNA synthetase family. AsnA subfamily.

It is found in the cytoplasm. It carries out the reaction L-aspartate + NH4(+) + ATP = L-asparagine + AMP + diphosphate + H(+). It participates in amino-acid biosynthesis; L-asparagine biosynthesis; L-asparagine from L-aspartate (ammonia route): step 1/1. This is Aspartate--ammonia ligase from Lactiplantibacillus plantarum (strain ATCC BAA-793 / NCIMB 8826 / WCFS1) (Lactobacillus plantarum).